A 278-amino-acid chain; its full sequence is UPF0276 protein Sama_1305 (278 aa).

Belongs to the UPF0276 family.

This Shewanella amazonensis (strain ATCC BAA-1098 / SB2B) protein is UPF0276 protein Sama_1305.